A 475-amino-acid polypeptide reads, in one-letter code: Lipoprotein lipase (475 aa).

Positions 1–27 (MESKALLLLALAVWLQSLTASRGGVAA) are cleaved as a signal peptide. Positions 32–53 (RDFIDIESKFALRTPEDTAEDT) are interaction with GPIHBP1. Cysteine 54 and cysteine 67 are joined by a disulfide. A glycan (N-linked (GlcNAc...) asparagine) is linked at asparagine 70. Position 121 is a 3'-nitrotyrosine (tyrosine 121). The active-site Nucleophile is serine 159. Aspartate 183 serves as the catalytic Charge relay system. Tyrosine 191 carries the 3'-nitrotyrosine modification. Residues alanine 194, arginine 197, serine 199, and aspartate 202 each contribute to the Ca(2+) site. Cysteine 243 and cysteine 266 are oxidised to a cystine. Residues 243–266 (CNIGEAIRVIAERGLGDVDQLVKC) form an essential for determining substrate specificity region. The active-site Charge relay system is the histidine 268. 2 cysteine pairs are disulfide-bonded: cysteine 291-cysteine 310 and cysteine 302-cysteine 305. The 124-residue stretch at 341 to 464 (FHYQVKIHFS…KGKAPAVFVK (124 aa)) folds into the PLAT domain. A 3'-nitrotyrosine modification is found at tyrosine 343. N-linked (GlcNAc...) asparagine glycosylation occurs at asparagine 386. An important for interaction with lipoprotein particles region spans residues 417-421 (WSDWW). An important for heparin binding region spans residues 430–434 (KIRVK). The interval 443–467 (IFCSREKVSHLQKGKAPAVFVKCHD) is interaction with GPIHBP1. The cysteines at positions 445 and 465 are disulfide-linked.

It belongs to the AB hydrolase superfamily. Lipase family. In terms of assembly, homodimer. Interacts with GPIHBP1 with 1:1 stoichiometry. Interacts with APOC2; the interaction activates LPL activity in the presence of lipids. Interaction with heparan sulfate proteoglycans is required to protect LPL against loss of activity. Associates with lipoprotein particles in blood plasma. Interacts with LMF1 and SEL1L; interaction with SEL1L is required to prevent aggregation of newly synthesized LPL in the endoplasmic reticulum (ER), and for normal export of LPL from the ER to the extracellular space. Interacts with SORL1; SORL1 acts as a sorting receptor, promoting LPL localization to endosomes and later to lysosomes, leading to degradation of newly synthesized LPL. In terms of processing, tyrosine nitration after lipopolysaccharide (LPS) challenge down-regulates the lipase activity. In terms of tissue distribution, highest levels in the spinal cord.

The protein resides in the cell membrane. It localises to the secreted. It is found in the extracellular space. The protein localises to the extracellular matrix. The enzyme catalyses a triacylglycerol + H2O = a diacylglycerol + a fatty acid + H(+). The catalysed reaction is a 1,2-diacyl-sn-glycero-3-phosphocholine + H2O = a 2-acyl-sn-glycero-3-phosphocholine + a fatty acid + H(+). It catalyses the reaction 1,2,3-tri-(9Z-octadecenoyl)-glycerol + H2O = di-(9Z)-octadecenoylglycerol + (9Z)-octadecenoate + H(+). It carries out the reaction 1,2-di-(9Z-octadecenoyl)-sn-glycero-3-phosphocholine + H2O = (9Z-octadecenoyl)-sn-glycero-3-phosphocholine + (9Z)-octadecenoate + H(+). The enzyme catalyses 1,2,3-tributanoylglycerol + H2O = dibutanoylglycerol + butanoate + H(+). The catalysed reaction is 1,2-dihexadecanoyl-sn-glycero-3-phosphocholine + H2O = hexadecanoyl-sn-glycero-3-phosphocholine + hexadecanoate + H(+). Its activity is regulated as follows. The apolipoprotein APOC2 acts as a coactivator of LPL activity. Ca(2+) binding promotes protein stability and formation of the active homodimer. Interaction with GPIHBP1 protects LPL against inactivation by ANGPTL4. Its function is as follows. Key enzyme in triglyceride metabolism. Catalyzes the hydrolysis of triglycerides from circulating chylomicrons and very low density lipoproteins (VLDL), and thereby plays an important role in lipid clearance from the blood stream, lipid utilization and storage. Although it has both phospholipase and triglyceride lipase activities it is primarily a triglyceride lipase with low but detectable phospholipase activity. Mediates margination of triglyceride-rich lipoprotein particles in capillaries. Recruited to its site of action on the luminal surface of vascular endothelium by binding to GPIHBP1 and cell surface heparan sulfate proteoglycans. In Papio anubis (Olive baboon), this protein is Lipoprotein lipase (LPL).